The chain runs to 177 residues: Large ribosomal subunit protein uL6 (177 aa).

This sequence belongs to the universal ribosomal protein uL6 family. In terms of assembly, part of the 50S ribosomal subunit.

Functionally, this protein binds to the 23S rRNA, and is important in its secondary structure. It is located near the subunit interface in the base of the L7/L12 stalk, and near the tRNA binding site of the peptidyltransferase center. This is Large ribosomal subunit protein uL6 from Vibrio atlanticus (strain LGP32) (Vibrio splendidus (strain Mel32)).